The following is a 105-amino-acid chain: uncharacterized protein (105 aa).

Positions 1–101 (MMDLGDKINP…KDIQEISAAV (101 aa)) constitute a Hcy-binding domain.

This is an uncharacterized protein from Saccharomyces cerevisiae (strain ATCC 204508 / S288c) (Baker's yeast).